Consider the following 437-residue polypeptide: Glutamyl-tRNA reductase (437 aa).

Residues 49 to 52 (TCNR), Ser109, 114 to 116 (EVQ), and Gln120 each bind substrate. The Nucleophile role is filled by Cys50. An NADP(+)-binding site is contributed by 189 to 194 (GAGDTA).

This sequence belongs to the glutamyl-tRNA reductase family. In terms of assembly, homodimer.

The enzyme catalyses (S)-4-amino-5-oxopentanoate + tRNA(Glu) + NADP(+) = L-glutamyl-tRNA(Glu) + NADPH + H(+). It participates in porphyrin-containing compound metabolism; protoporphyrin-IX biosynthesis; 5-aminolevulinate from L-glutamyl-tRNA(Glu): step 1/2. The protein operates within porphyrin-containing compound metabolism; chlorophyll biosynthesis. Catalyzes the NADPH-dependent reduction of glutamyl-tRNA(Glu) to glutamate 1-semialdehyde (GSA). The protein is Glutamyl-tRNA reductase of Chloroherpeton thalassium (strain ATCC 35110 / GB-78).